A 300-amino-acid polypeptide reads, in one-letter code: ClpXP adapter protein SpxH (300 aa).

This sequence belongs to the SpxH family. Interacts with Spx.

The protein resides in the cytoplasm. Adapter protein required for efficient degradation of Spx by ClpXP under non-stress conditions. Interaction with Spx stabilizes Spx and exposes the C-terminus of Spx for recognition and proteolysis by ClpXP. This chain is ClpXP adapter protein SpxH, found in Shouchella clausii (strain KSM-K16) (Alkalihalobacillus clausii).